Consider the following 220-residue polypeptide: Endonuclease NucS (220 aa).

The protein belongs to the NucS endonuclease family.

Its subcellular location is the cytoplasm. Cleaves both 3' and 5' ssDNA extremities of branched DNA structures. In Parafrankia sp. (strain EAN1pec), this protein is Endonuclease NucS.